A 305-amino-acid chain; its full sequence is UDP-3-O-acyl-N-acetylglucosamine deacetylase (305 aa).

Zn(2+) contacts are provided by His79, His238, and Asp242. The active-site Proton donor is the His265.

The protein belongs to the LpxC family. Requires Zn(2+) as cofactor.

The enzyme catalyses a UDP-3-O-[(3R)-3-hydroxyacyl]-N-acetyl-alpha-D-glucosamine + H2O = a UDP-3-O-[(3R)-3-hydroxyacyl]-alpha-D-glucosamine + acetate. The protein operates within glycolipid biosynthesis; lipid IV(A) biosynthesis; lipid IV(A) from (3R)-3-hydroxytetradecanoyl-[acyl-carrier-protein] and UDP-N-acetyl-alpha-D-glucosamine: step 2/6. Catalyzes the hydrolysis of UDP-3-O-myristoyl-N-acetylglucosamine to form UDP-3-O-myristoylglucosamine and acetate, the committed step in lipid A biosynthesis. The protein is UDP-3-O-acyl-N-acetylglucosamine deacetylase of Vibrio parahaemolyticus serotype O3:K6 (strain RIMD 2210633).